The chain runs to 445 residues: Putative serpin-Z5 (445 aa).

Positions 356–380 are RCL; sequence GTEAAASAINMVCGMSMTPEPRPVP.

It belongs to the serpin family.

Its function is as follows. Probable serine protease inhibitor. This is Putative serpin-Z5 from Oryza sativa subsp. japonica (Rice).